The primary structure comprises 423 residues: Imidazolonepropionase (423 aa).

His78 and His80 together coordinate Fe(3+). Residues His78 and His80 each contribute to the Zn(2+) site. 4-imidazolone-5-propanoate is bound by residues Arg87, Tyr150, and His183. Tyr150 is an N-formimidoyl-L-glutamate binding site. His247 lines the Fe(3+) pocket. His247 is a Zn(2+) binding site. Glu250 is a binding site for 4-imidazolone-5-propanoate. Asp322 contacts Fe(3+). Residue Asp322 coordinates Zn(2+). Residues Asn324 and Gly326 each contribute to the N-formimidoyl-L-glutamate site. Ser327 contacts 4-imidazolone-5-propanoate.

It belongs to the metallo-dependent hydrolases superfamily. HutI family. The cofactor is Zn(2+). Requires Fe(3+) as cofactor.

The protein resides in the cytoplasm. It catalyses the reaction 4-imidazolone-5-propanoate + H2O = N-formimidoyl-L-glutamate. The protein operates within amino-acid degradation; L-histidine degradation into L-glutamate; N-formimidoyl-L-glutamate from L-histidine: step 3/3. Functionally, catalyzes the hydrolytic cleavage of the carbon-nitrogen bond in imidazolone-5-propanoate to yield N-formimidoyl-L-glutamate. It is the third step in the universal histidine degradation pathway. In Bacillus cereus (strain G9842), this protein is Imidazolonepropionase.